Here is a 351-residue protein sequence, read N- to C-terminus: Protein-glutamate methylesterase/protein-glutamine glutaminase (351 aa).

Positions 6-123 (RVLVVDDSPT…ARPFGDLADK (118 aa)) constitute a Response regulatory domain. A 4-aspartylphosphate modification is found at D57. The CheB-type methylesterase domain occupies 154–346 (YRAGRKVVAI…EEILKLTTAR (193 aa)). Catalysis depends on residues S166, H192, and D288.

This sequence belongs to the CheB family. Post-translationally, phosphorylated by CheA. Phosphorylation of the N-terminal regulatory domain activates the methylesterase activity.

The protein resides in the cytoplasm. It catalyses the reaction [protein]-L-glutamate 5-O-methyl ester + H2O = L-glutamyl-[protein] + methanol + H(+). The enzyme catalyses L-glutaminyl-[protein] + H2O = L-glutamyl-[protein] + NH4(+). In terms of biological role, involved in chemotaxis. Part of a chemotaxis signal transduction system that modulates chemotaxis in response to various stimuli. Catalyzes the demethylation of specific methylglutamate residues introduced into the chemoreceptors (methyl-accepting chemotaxis proteins or MCP) by CheR. Also mediates the irreversible deamidation of specific glutamine residues to glutamic acid. In Agrobacterium fabrum (strain C58 / ATCC 33970) (Agrobacterium tumefaciens (strain C58)), this protein is Protein-glutamate methylesterase/protein-glutamine glutaminase.